The chain runs to 396 residues: Protein GTS1 (396 aa).

An Arf-GAP domain is found at 14 to 141 (DRELKELINS…FRYDEIKPED (128 aa)). Residues 30–53 (CGECGNFYPTWCSVNLGVFLCGRC) form a C4-type zinc finger. Positions 148–161 (DFDGESDRFDERNR) are enriched in basic and acidic residues. Disordered stretches follow at residues 148-194 (DFDG…SGSR) and 233-266 (KSSS…QPAI). A Phosphoserine modification is found at Ser-153. Phosphotyrosine is present on Tyr-181. Residues Ser-184 and Ser-187 each carry the phosphoserine modification. The UBA domain occupies 193–234 (SRYSRQLAELKDMGFGDTNKNLDALSSAHGNINRAIDYLEKS). The segment covering 234-249 (SSSSRNSVSAAATTST) has biased composition (low complexity). Ser-240 is modified (phosphoserine). Thr-249 carries the post-translational modification Phosphothreonine.

Its subcellular location is the nucleus. Appears to modulate the timing of budding to obtain an appropriate cell size independent of the DNA replication cycle. Transcription factor involved in both heat resistance and flocculation. The protein is Protein GTS1 (GTS1) of Saccharomyces cerevisiae (strain ATCC 204508 / S288c) (Baker's yeast).